Consider the following 3394-residue polypeptide: Protein PFC0760c (3394 aa).

Composition is skewed to low complexity over residues 471–508 (NNND…NYNN), 515–528 (NMNS…NNLH), and 786–841 (NNQN…NQNN). Disordered stretches follow at residues 471–539 (NNND…DENN), 779–844 (MSSN…NAGI), 1038–1099 (NKKK…NNDD), 1892–1918 (TTTT…NNND), 2648–2693 (KMDL…DNHL), 2835–2909 (AKNE…NSNN), 3000–3057 (VSVG…DVNT), and 3107–3394 (DYVN…NSEE). Residues 1038–1097 (NKKKNNDGDNKSQEDDDGNKKKNNDGDNKSQEDDDGNKKKNNDGDNKSQEDDYGNKKKNN) are compositionally biased toward basic and acidic residues. Acidic residues predominate over residues 2657–2671 (GDDDDDDDDDDDDDN). A compositionally biased stretch (low complexity) spans 2672 to 2686 (NNNNNNNNNNNNNNM). Residues 2836–2846 (KNENYPVSTHY) show a composition bias toward polar residues. 2 stretches are compositionally biased toward low complexity: residues 2855-2865 (DNINNDNNNDN) and 2872-2909 (NDNI…NSNN). 2 stretches are compositionally biased toward acidic residues: residues 3007–3047 (DNND…EEKE) and 3147–3257 (DDDE…DDND). Residues 3258–3292 (NDHNDDNNDEEKYSCHDDKNEHTNNDLLNIDHDNN) show a composition bias toward basic and acidic residues. Residues 3300–3309 (LYSTYNVSVS) are compositionally biased toward polar residues. Residues 3310 to 3320 (HNKDPSNKENE) show a composition bias toward basic and acidic residues. Positions 3321-3330 (IQNLISIDSS) are enriched in polar residues. Acidic residues predominate over residues 3331 to 3379 (NENDENDENDENDENDENDENDENDENDENDENDEKDENDENDENDENF). Residues 3385–3394 (GTLNEMNSEE) are compositionally biased toward polar residues.

In Plasmodium falciparum (isolate 3D7), this protein is Protein PFC0760c.